The sequence spans 485 residues: Glutamyl-tRNA(Gln) amidotransferase subunit A (485 aa).

Catalysis depends on charge relay system residues Lys74 and Ser149. The active-site Acyl-ester intermediate is the Ser173.

Belongs to the amidase family. GatA subfamily. As to quaternary structure, heterotrimer of A, B and C subunits.

It catalyses the reaction L-glutamyl-tRNA(Gln) + L-glutamine + ATP + H2O = L-glutaminyl-tRNA(Gln) + L-glutamate + ADP + phosphate + H(+). Functionally, allows the formation of correctly charged Gln-tRNA(Gln) through the transamidation of misacylated Glu-tRNA(Gln) in organisms which lack glutaminyl-tRNA synthetase. The reaction takes place in the presence of glutamine and ATP through an activated gamma-phospho-Glu-tRNA(Gln). This chain is Glutamyl-tRNA(Gln) amidotransferase subunit A, found in Janthinobacterium sp. (strain Marseille) (Minibacterium massiliensis).